A 267-amino-acid chain; its full sequence is Nus factor SuhB (267 aa).

Residues Glu67, Asp84, and Leu86 each contribute to the Mg(2+) site. Glu67 is a binding site for substrate. Residues 86-89 (LDGT), Arg183, and Asp212 each bind substrate.

It belongs to the inositol monophosphatase superfamily. In terms of assembly, homodimer. The rRNA transcription and antitermination complex (rrnTAC) consists of RNA polymerase (RNAP), NusA, NusB, NusE (rpsJ), NusG, SubB, ribosomal protein S4, DNA and precursor rRNA; S4 is more flexible than other subunits. Requires Mg(2+) as cofactor.

It is found in the cytoplasm. It carries out the reaction a myo-inositol phosphate + H2O = myo-inositol + phosphate. Part of the processive rRNA transcription and antitermination complex (rrnTAC). The complex forms an RNA-chaperone ring around the RNA exit tunnel of RNA polymerase (RNAP). It supports rapid transcription and antitermination of rRNA operons, cotranscriptional rRNA folding, and annealing of distal rRNA regions to allow correct ribosome biogenesis. This subunit may play a central role in organizing the structure. IMPase activity is not required for its Nus factor function. In Escherichia coli O157:H7, this protein is Nus factor SuhB (suhB).